A 611-amino-acid chain; its full sequence is UvrABC system protein C (611 aa).

A GIY-YIG domain is found at 12 to 96 (DQPGIYQYFD…IKQLKPKYNI (85 aa)). Positions 202–237 (EKILEILNQKMQKYAENLQFEEAAEIRDRIKSIESA) constitute a UVR domain.

The protein belongs to the UvrC family. As to quaternary structure, interacts with UvrB in an incision complex.

It is found in the cytoplasm. The UvrABC repair system catalyzes the recognition and processing of DNA lesions. UvrC both incises the 5' and 3' sides of the lesion. The N-terminal half is responsible for the 3' incision and the C-terminal half is responsible for the 5' incision. The protein is UvrABC system protein C of Nautilia profundicola (strain ATCC BAA-1463 / DSM 18972 / AmH).